Consider the following 123-residue polypeptide: Immunoglobulin lambda variable 9-49 (123 aa).

The signal sequence occupies residues 1 to 19 (MAWAPLLLTLLSLLTGSLS). A framework-1 region spans residues 20–44 (QPVLTQPPSASASLGASVTLTCTLS). In terms of domain architecture, Ig-like spans 21-123 (PVLTQPPSAS…ADHGSGSNFV (103 aa)). Residues C41 and C112 are joined by a disulfide bond. The interval 45 to 51 (SGYSNYK) is complementarity-determining-1. Residues 52–68 (VDWYQQRPGKGPRFVMR) form a framework-2 region. A complementarity-determining-2 region spans residues 69–76 (VGTGGIVG). The tract at residues 77–112 (SKGDGIPDRFSVLGSGLNRYLTIKNIQEEDESDYHC) is framework-3. Y96 carries the post-translational modification Phosphotyrosine. The residue at position 98 (T98) is a Phosphothreonine. The complementarity-determining-3 stretch occupies residues 113–123 (GADHGSGSNFV).

In terms of assembly, immunoglobulins are composed of two identical heavy chains and two identical light chains; disulfide-linked.

The protein localises to the secreted. The protein resides in the cell membrane. Its function is as follows. V region of the variable domain of immunoglobulin light chains that participates in the antigen recognition. Immunoglobulins, also known as antibodies, are membrane-bound or secreted glycoproteins produced by B lymphocytes. In the recognition phase of humoral immunity, the membrane-bound immunoglobulins serve as receptors which, upon binding of a specific antigen, trigger the clonal expansion and differentiation of B lymphocytes into immunoglobulins-secreting plasma cells. Secreted immunoglobulins mediate the effector phase of humoral immunity, which results in the elimination of bound antigens. The antigen binding site is formed by the variable domain of one heavy chain, together with that of its associated light chain. Thus, each immunoglobulin has two antigen binding sites with remarkable affinity for a particular antigen. The variable domains are assembled by a process called V-(D)-J rearrangement and can then be subjected to somatic hypermutations which, after exposure to antigen and selection, allow affinity maturation for a particular antigen. In Homo sapiens (Human), this protein is Immunoglobulin lambda variable 9-49.